We begin with the raw amino-acid sequence, 6306 residues long: Adhesion G-protein coupled receptor V1 (6306 aa).

The N-terminal stretch at 1–29 (MSVFLGPGMPSASLLVNLLSALLILFVFG) is a signal peptide. Calx-beta domains lie at 30 to 117 (ETEI…FHLT), 133 to 237 (VTVT…IQLK), 262 to 362 (PVRF…HIML), 388 to 488 (KPYG…LQIL), 645 to 745 (PAIA…TLSL), 763 to 861 (DLII…VVLS), 876 to 979 (VNIT…VILL), 993 to 1093 (ATLR…IILL), 1108 to 1208 (TVII…LKLV), 1444 to 1544 (AMPR…FILK), 1564 to 1665 (TIQK…RVTL), 1710 to 1809 (TGLP…VELL), 1850 to 1952 (ILVT…VSVL), 1966 to 2079 (TLTV…IELL), 2107 to 2206 (QLII…VQLM), 2222 to 2324 (VIII…VQLT), 2441 to 2541 (TLCL…FLIS), 2584 to 2676 (NISP…VSLV), 2689 to 2789 (DTVR…QVIL), 2814 to 2925 (LTVE…VNLT), 2947 to 3048 (TAQV…LILT), and 3063 to 3172 (LIIV…CTLF). The Extracellular portion of the chain corresponds to 30 to 5908 (ETEIRFTGQT…TDNLSSYNEA (5879 aa)). EAR repeat units lie at residues 3255–3296 (VFSV…RWQG), 3297–3345 (IFIP…TFTS), 3348–3393 (KLFL…RWNG), 3395–3439 (SFVL…RWSG), 3441–3488 (GFIN…IWEM), and 3492–3534 (SFRY…CWNS). 13 Calx-beta domains span residues 3525 to 3625 (DMSA…KVQL), 3639 to 3739 (SVTI…IVTL), 3775 to 3875 (GLVG…VTIT), 3899 to 4006 (AEIM…ISLI), 4020 to 4123 (VTVV…IQLI), 4139 to 4239 (IIIR…EFQL), 4255 to 4354 (ANIT…LTIT), 4387 to 4489 (RIII…ILLT), 4512 to 4612 (SPFG…IIKL), 4634 to 4734 (EFGD…VIQL), 4992 to 5095 (SGFI…INLT), 5288 to 5332 (AVEE…YVFL), and 5368 to 5468 (IGFS…FVEL). The GAIN-B domain maps to 5747-5903 (SILALHWYPQ…AVYARTDNLS (157 aa)). Intrachain disulfides connect Cys5856/Cys5885 and Cys5873/Cys5887. The interval 5856-5903 (CLLWNQAAASWLSDSQFCKVVEETADYVECACSHMSVYAVYARTDNLS) is GPS. Residues 5909–5929 (FFTSGFICISGLCLAVLSHIF) traverse the membrane as a helical segment. Over 5930–5939 (CARYSMFAAK) the chain is Cytoplasmic. Residues 5940 to 5960 (LLTHMMAASLGTQILFLASAY) traverse the membrane as a helical segment. Residues 5961-5979 (ASPQLAEESCSAMAAVTHY) are Extracellular-facing. A helical transmembrane segment spans residues 5980-6000 (LYLCQFSWMLIQSVNFWYVLV). At 6001–6010 (MNDEHTERRY) the chain is on the cytoplasmic side. Residues 6011-6031 (LLFFLLSWGLPAFVVILLIVI) form a helical membrane-spanning segment. Over 6032–6059 (LKGIYHQSMSQIYGLIHGDLCFIPNVYA) the chain is Extracellular. The helical transmembrane segment at 6060–6080 (ALFTAALVPLTCLVVVFVVFI) threads the bilayer. The Cytoplasmic segment spans residues 6081-6104 (HAYQVKPQWKAYDDVFRGRTNAAE). The chain crosses the membrane as a helical span at residues 6105 to 6125 (IPLILYLFALISVTWLWGGLH). Residues 6126-6133 (MAYRHFWM) lie on the Extracellular side of the membrane. Residues 6134-6154 (LVLFVIFNSLQGLYVFMVYFI) traverse the membrane as a helical segment. Residues 6155–6306 (LHNQMCCPMK…RRIPIADTHL (152 aa)) are Cytoplasmic-facing. The tract at residues 6216–6248 (ASFQQGSQASPDLKPSPQNGATFPSSGGYGQGS) is disordered. Residues 6217-6240 (SFQQGSQASPDLKPSPQNGATFPS) show a composition bias toward polar residues.

The protein belongs to the G-protein coupled receptor 2 family. Adhesion G-protein coupled receptor (ADGR) subfamily. As to quaternary structure, forms a heterodimer, consisting of a large extracellular region (alpha subunit) non-covalently linked to a seven-transmembrane moiety (beta subunit). Component of USH2 complex, composed of ADGRV1, PDZD7, USH2A and WHRN. Interacts with USH2A and WHRN. Interacts (via the cytoplasmic region) with PDZD7. Interacts (via the cytoplasmic region) with MYO7A (via MyTH4-FERM domains). Post-translationally, autoproteolytically cleaved into 2 subunits, an extracellular alpha subunit and a seven-transmembrane subunit. Expressed at low levels in adult tissues.

It localises to the cell membrane. It is found in the cell projection. The protein localises to the stereocilium membrane. The protein resides in the photoreceptor inner segment. In terms of biological role, G-protein coupled receptor which has an essential role in the development of hearing and vision. Couples to G-alpha(i)-proteins, GNAI1/2/3, G-alpha(q)-proteins, GNAQ, as well as G-alpha(s)-proteins, GNAS, inhibiting adenylate cyclase (AC) activity and cAMP production. Required for the hair bundle ankle formation, which connects growing stereocilia in developing cochlear hair cells of the inner ear. In response to extracellular calcium, activates kinases PKA and PKC to regulate myelination by inhibiting the ubiquitination of MAG, thus enhancing the stability of this protein in myelin-forming cells of the auditory pathway. In retina photoreceptors, the USH2 complex is required for the maintenance of periciliary membrane complex that seems to play a role in regulating intracellular protein transport. Involved in the regulation of bone metabolism. Cleaved ADGRV1 beta-subunit couples with G-alpha(i)-proteins, GNAI1/2/3, and constitutively inhibits adenylate cyclase (AC) activity with a stronger effect than full ADGRV1. The protein is Adhesion G-protein coupled receptor V1 of Homo sapiens (Human).